Consider the following 876-residue polypeptide: Alanine--tRNA ligase (876 aa).

K74 carries the N6-acetyllysine modification. Zn(2+)-binding residues include H564, H568, C666, and H670.

It belongs to the class-II aminoacyl-tRNA synthetase family. As to quaternary structure, homotetramer. Zn(2+) is required as a cofactor.

It localises to the cytoplasm. It carries out the reaction tRNA(Ala) + L-alanine + ATP = L-alanyl-tRNA(Ala) + AMP + diphosphate. In terms of biological role, catalyzes the attachment of alanine to tRNA(Ala) in a two-step reaction: alanine is first activated by ATP to form Ala-AMP and then transferred to the acceptor end of tRNA(Ala). Also edits incorrectly charged Ser-tRNA(Ala) and Gly-tRNA(Ala) via its editing domain. The chain is Alanine--tRNA ligase from Shigella boydii serotype 18 (strain CDC 3083-94 / BS512).